Consider the following 838-residue polypeptide: Ras-interacting protein RIP3 (838 aa).

Disordered stretches follow at residues V66–A97, K157–K290, and N305–A336. Composition is skewed to low complexity over residues S67–A97, K157–P241, and P248–Q284. The segment covering Q310–K321 has biased composition (basic and acidic residues). Residues Q441 to N515 form the CRIM domain. Disordered regions lie at residues K522 to Q581 and Q594 to A646. 3 stretches are compositionally biased toward low complexity: residues N537–N556, Q563–Q581, and Q594–Q620. Gly residues predominate over residues V621–N631. One can recognise an RBD domain in the interval L648–R717.

It belongs to the SIN1 family. As to quaternary structure, interacts with activated RasG. Part of a complex, TORC2, consisting of tor, lst8, piaA and ripA. Additional proteins, such as 14-3-3 and heat-shock proteins, may also belong to the TORC2 complex.

Functionally, component of a Ras-regulated pathway involved in integrating chemotaxis and signal relay pathways that are essential for aggregation. This is Ras-interacting protein RIP3 (ripA) from Dictyostelium discoideum (Social amoeba).